The sequence spans 274 residues: uncharacterized protein (274 aa).

Residues Asn-99–Lys-206 adopt a coiled-coil conformation.

This is an uncharacterized protein from Dictyostelium discoideum (Social amoeba).